A 416-amino-acid chain; its full sequence is D-amino acid dehydrogenase 2 (416 aa).

3-17 contributes to the FAD binding site; that stretch reads ITVLGAGVVGTAAAY.

The protein belongs to the DadA oxidoreductase family. Requires FAD as cofactor.

It carries out the reaction a D-alpha-amino acid + A + H2O = a 2-oxocarboxylate + AH2 + NH4(+). Its function is as follows. Oxidative deamination of D-amino acids. This is D-amino acid dehydrogenase 2 (dadA2) from Mesorhizobium japonicum (strain LMG 29417 / CECT 9101 / MAFF 303099) (Mesorhizobium loti (strain MAFF 303099)).